Consider the following 461-residue polypeptide: Glycine--tRNA ligase (461 aa).

Substrate is bound by residues R99 and E173. Residues 205–207 (RNE), 215–220 (FRTREF), 289–290 (EL), and 333–336 (GADR) contribute to the ATP site. A substrate-binding site is contributed by 220–224 (FEQME). 329-333 (EPSLG) lines the substrate pocket.

Belongs to the class-II aminoacyl-tRNA synthetase family. Homodimer.

It is found in the cytoplasm. It catalyses the reaction tRNA(Gly) + glycine + ATP = glycyl-tRNA(Gly) + AMP + diphosphate. Its function is as follows. Catalyzes the attachment of glycine to tRNA(Gly). This chain is Glycine--tRNA ligase, found in Lysinibacillus sphaericus (strain C3-41).